Consider the following 1033-residue polypeptide: Ubiquitin carboxyl-terminal hydrolase 48 (1033 aa).

The USP domain occupies 89-419; sequence VGLTNLGATC…NAYMLVYRLQ (331 aa). Residue Cys98 is the Nucleophile of the active site. His351 functions as the Proton acceptor in the catalytic mechanism. DUSP domains follow at residues 457 to 552, 567 to 690, and 710 to 823; these read QSVA…KALC, NQLN…NKEC, and MMAS…RTRA. A disordered region spans residues 610–639; it reads EQDEDAEHSNGKLNGNAPNKDEVNEEKREE. A disordered region spans residues 878–920; the sequence is APELNVSSSEAEEEREENKPEGEQDPDFNQSNGGAKRQKLSHQ. Residues 931–1007 enclose the Ubiquitin-like domain; the sequence is RRSTRHRKVR…ILLKADEPIA (77 aa).

The protein belongs to the peptidase C19 family.

It localises to the cytoplasm. The protein localises to the nucleus. The enzyme catalyses Thiol-dependent hydrolysis of ester, thioester, amide, peptide and isopeptide bonds formed by the C-terminal Gly of ubiquitin (a 76-residue protein attached to proteins as an intracellular targeting signal).. Functionally, recognizes and hydrolyzes the peptide bond at the C-terminal Gly of ubiquitin. Involved in the processing of poly-ubiquitin precursors as well as that of ubiquitinated proteins. The polypeptide is Ubiquitin carboxyl-terminal hydrolase 48 (USP48) (Gallus gallus (Chicken)).